The sequence spans 284 residues: NAD kinase (284 aa).

Residue aspartate 61 is the Proton acceptor of the active site. NAD(+) contacts are provided by residues 61 to 62 (DG), arginine 66, 136 to 137 (ND), arginine 147, lysine 164, aspartate 166, and leucine 201.

The protein belongs to the NAD kinase family. Requires a divalent metal cation as cofactor.

It is found in the cytoplasm. It catalyses the reaction NAD(+) + ATP = ADP + NADP(+) + H(+). Involved in the regulation of the intracellular balance of NAD and NADP, and is a key enzyme in the biosynthesis of NADP. Catalyzes specifically the phosphorylation on 2'-hydroxyl of the adenosine moiety of NAD to yield NADP. The protein is NAD kinase of Dehalococcoides mccartyi (strain CBDB1).